The following is a 143-amino-acid chain: 3-dehydroquinate dehydratase (143 aa).

Tyrosine 23 functions as the Proton acceptor in the catalytic mechanism. Asparagine 74, histidine 80, and aspartate 87 together coordinate substrate. The active-site Proton donor is histidine 100. Residues 101–102 and arginine 111 each bind substrate; that span reads IS.

It belongs to the type-II 3-dehydroquinase family. Homododecamer.

The enzyme catalyses 3-dehydroquinate = 3-dehydroshikimate + H2O. It functions in the pathway metabolic intermediate biosynthesis; chorismate biosynthesis; chorismate from D-erythrose 4-phosphate and phosphoenolpyruvate: step 3/7. Its function is as follows. Catalyzes a trans-dehydration via an enolate intermediate. In Endomicrobium trichonymphae, this protein is 3-dehydroquinate dehydratase.